We begin with the raw amino-acid sequence, 121 residues long: MKLFRCFKPCRGQSSNPHTSESQERNIQTGSPIYTVSSNYQESRTSRMLDFSTSLTPEGLPIFTQTFRQPKTPMPSRITSPKMVIIVNPGSTRCLGVQRQIKTTSTTTPSMRDVWKRLSQL.

The interval 11 to 30 (RGQSSNPHTSESQERNIQTG) is disordered. Over residues 12 to 30 (GQSSNPHTSESQERNIQTG) the composition is skewed to polar residues.

This sequence belongs to the geminiviridae protein AC4/C4 family.

Its function is as follows. Pathogenicity determinant. May act as a suppressor of RNA-mediated gene silencing, also known as post-transcriptional gene silencing (PTGS), a mechanism of plant viral defense that limits the accumulation of viral RNAs. This Cabbage leaf curl virus (isolate Jamaica) (CaLCuV) protein is Protein AC4.